The chain runs to 37 residues: Large ribosomal subunit protein bL36 (37 aa).

Belongs to the bacterial ribosomal protein bL36 family.

In Vesicomyosocius okutanii subsp. Calyptogena okutanii (strain HA), this protein is Large ribosomal subunit protein bL36.